A 101-amino-acid chain; its full sequence is Cysteine-rich and transmembrane domain-containing protein B (101 aa).

Positions methionine 1–serine 80 are disordered. Residues aspartate 24 to glycine 43 are compositionally biased toward pro residues. Low complexity predominate over residues tyrosine 59–glutamine 77. The chain crosses the membrane as a helical span at residues lysine 78–cysteine 95.

This sequence belongs to the CYSTM1 family.

The protein resides in the membrane. The protein is Cysteine-rich and transmembrane domain-containing protein B of Arabidopsis thaliana (Mouse-ear cress).